Consider the following 1127-residue polypeptide: DNA-directed RNA polymerase I subunit RPA2 homolog (1127 aa).

Phosphoserine is present on serine 1025.

The protein belongs to the RNA polymerase beta chain family. Component of the RNA polymerase I (Pol I) complex consisting of at least 13 subunits.

The protein localises to the nucleus. Its subcellular location is the nucleolus. The catalysed reaction is RNA(n) + a ribonucleoside 5'-triphosphate = RNA(n+1) + diphosphate. With respect to regulation, antisense ribosomal siRNAs silence rRNA expression during the elongation phase by decreasing rpoa-2 occupancy downstream of the RNAi-targeted region in nrde-2-dependent manner. Its function is as follows. DNA-dependent RNA polymerase catalyzes the transcription of DNA into RNA using the four ribonucleoside triphosphates as substrates. Second largest core component of RNA polymerase I which synthesizes ribosomal RNA precursors. Proposed to contribute to the polymerase catalytic activity and forms the polymerase active center together with the largest subunit. Pol I is composed of mobile elements and RPA2 is part of the core element with the central large cleft and probably a clamp element that moves to open and close the cleft. Specifically binds to 18S, 5.8S and 26S rDNA, but not to 5S rDNA. The polypeptide is DNA-directed RNA polymerase I subunit RPA2 homolog (Caenorhabditis elegans).